The primary structure comprises 334 residues: Methionyl-tRNA formyltransferase (334 aa).

Residue serine 111–proline 114 coordinates (6S)-5,6,7,8-tetrahydrofolate.

Belongs to the Fmt family.

It catalyses the reaction L-methionyl-tRNA(fMet) + (6R)-10-formyltetrahydrofolate = N-formyl-L-methionyl-tRNA(fMet) + (6S)-5,6,7,8-tetrahydrofolate + H(+). In terms of biological role, attaches a formyl group to the free amino group of methionyl-tRNA(fMet). The formyl group appears to play a dual role in the initiator identity of N-formylmethionyl-tRNA by promoting its recognition by IF2 and preventing the misappropriation of this tRNA by the elongation apparatus. This Cyanothece sp. (strain PCC 7425 / ATCC 29141) protein is Methionyl-tRNA formyltransferase.